The chain runs to 362 residues: Putative sphingolipid delta(4)-desaturase/C4-monooxygenase (362 aa).

3 helical membrane-spanning segments follow: residues 45–61 (YVVS…CWLL), 71–91 (LEAY…IHDI), and 107–127 (FFGM…FKKY). Positions 89–93 (HDISH) match the Histidine box-1 motif. The short motif at 128 to 132 (HVEHH) is the Histidine box-2 element. The next 2 helical transmembrane spans lie at 160–177 (LLWL…PLII) and 198–218 (LLIL…GTII). The short motif at 259-263 (HVEHH) is the Histidine box-3 element.

It belongs to the fatty acid desaturase type 1 family. DEGS subfamily.

It is found in the membrane. It carries out the reaction an N-acyl-15-methylhexadecasphinganine + 2 Fe(II)-[cytochrome b5] + O2 + 2 H(+) = an N-acyl-4-hydroxy-15-methylhexadecasphinganine + 2 Fe(III)-[cytochrome b5] + H2O. It catalyses the reaction an N-acyl-15-methylhexadecasphinganine + 2 Fe(II)-[cytochrome b5] + O2 + 2 H(+) = an N-acyl-15-methylhexadecasphing-4-enine + 2 Fe(III)-[cytochrome b5] + 2 H2O. The catalysed reaction is a dihydroceramide + 2 Fe(II)-[cytochrome b5] + O2 + 2 H(+) = a phytoceramide + 2 Fe(III)-[cytochrome b5] + H2O. The enzyme catalyses an N-acylsphinganine + 2 Fe(II)-[cytochrome b5] + O2 + 2 H(+) = an N-acylsphing-4-enine + 2 Fe(III)-[cytochrome b5] + 2 H2O. It carries out the reaction N-octanoylsphinganine + 2 Fe(II)-[cytochrome b5] + O2 + 2 H(+) = N-octanoyl-4-hydroxysphinganine + 2 Fe(III)-[cytochrome b5] + H2O. It catalyses the reaction an N-acylsphinganine + 2 Fe(II)-[cytochrome b5] + O2 + 2 H(+) = an N-acyl-(4R)-4-hydroxysphinganine + 2 Fe(III)-[cytochrome b5] + H2O. It participates in lipid metabolism; sphingolipid metabolism. Its function is as follows. Bifunctional enzyme which acts both as a sphingolipid delta(4)-desaturase and a sphingolipid C4-monooxygenase. C.elegans contain specific sphingoid bases, which are unique or different in structure compared to the sphingoid bases found in other animals. Two examples of these distinctive compounds are: 15-methylhexadecasphinganine and 15-methylhexadecasphing-4-enine and this enzyme can catalyze their conversion. The sequence is that of Putative sphingolipid delta(4)-desaturase/C4-monooxygenase (ttm-5) from Caenorhabditis elegans.